Consider the following 160-residue polypeptide: Small ribosomal subunit protein uS17z (160 aa).

The protein belongs to the universal ribosomal protein uS17 family.

Its subcellular location is the cytoplasm. This is Small ribosomal subunit protein uS17z (RPS11A) from Arabidopsis thaliana (Mouse-ear cress).